A 993-amino-acid polypeptide reads, in one-letter code: Vacuolar membrane protease (993 aa).

Over methionine 1–threonine 24 the chain is Cytoplasmic. The helical transmembrane segment at leucine 25–valine 45 threads the bilayer. Over proline 46–threonine 391 the chain is Vacuolar. Residues asparagine 59, asparagine 116, and asparagine 119 are each glycosylated (N-linked (GlcNAc...) asparagine). Residues histidine 175 and aspartate 187 each contribute to the Zn(2+) site. Glutamate 221 serves as the catalytic Proton acceptor. Glutamate 222 provides a ligand contact to Zn(2+). N-linked (GlcNAc...) asparagine glycosylation occurs at asparagine 238. Glutamate 247 and histidine 320 together coordinate Zn(2+). The helical transmembrane segment at leucine 392–isoleucine 412 threads the bilayer. The Cytoplasmic portion of the chain corresponds to alanine 413–threonine 447. A helical membrane pass occupies residues proline 448–isoleucine 468. At asparagine 469–serine 475 the chain is on the vacuolar side. Residues serine 476–alanine 496 traverse the membrane as a helical segment. The Cytoplasmic segment spans residues arginine 497–arginine 509. A helical membrane pass occupies residues alanine 510–tyrosine 530. Residues alanine 531–lysine 534 are Vacuolar-facing. The chain crosses the membrane as a helical span at residues glycine 535–valine 555. The Cytoplasmic segment spans residues serine 556 to tryptophan 672. A disordered region spans residues arginine 579 to serine 621. Residues isoleucine 673–leucine 693 form a helical membrane-spanning segment. Residues leucine 694–phenylalanine 709 lie on the Vacuolar side of the membrane. A helical membrane pass occupies residues isoleucine 710–isoleucine 730. Over histidine 731–valine 737 the chain is Cytoplasmic. The chain crosses the membrane as a helical span at residues proline 738–phenylalanine 758. At serine 759–glutamine 993 the chain is on the vacuolar side. N-linked (GlcNAc...) asparagine glycans are attached at residues asparagine 806, asparagine 847, and asparagine 955.

Belongs to the peptidase M28 family. It depends on Zn(2+) as a cofactor.

The protein localises to the vacuole membrane. Functionally, may be involved in vacuolar sorting and osmoregulation. In Paracoccidioides lutzii (strain ATCC MYA-826 / Pb01) (Paracoccidioides brasiliensis), this protein is Vacuolar membrane protease.